The primary structure comprises 251 residues: MSDRRFALIPCAGTGSRAGGSVPKQYQPVAGRPMIWYALAAFSACDAISATALVLAPDDMPLESRFGADIFAGLRFDTAFVGGDTRHASVLAGLHHLAQLGATDTDWVLVHDAARPGLTPAMIHNLVRAVESDNDDDPDAAIGGILAVPVPDTLKRADAGERIGTTVPRDGLWQAQTPQMFRVGVLRQALQDALAAGAVVTDEASAIERLGLHPRLVNGSLRNFKVTYPEDFALAEVLLGTGPARSADSGA.

The protein belongs to the IspD/TarI cytidylyltransferase family. IspD subfamily.

The enzyme catalyses 2-C-methyl-D-erythritol 4-phosphate + CTP + H(+) = 4-CDP-2-C-methyl-D-erythritol + diphosphate. It functions in the pathway isoprenoid biosynthesis; isopentenyl diphosphate biosynthesis via DXP pathway; isopentenyl diphosphate from 1-deoxy-D-xylulose 5-phosphate: step 2/6. Catalyzes the formation of 4-diphosphocytidyl-2-C-methyl-D-erythritol from CTP and 2-C-methyl-D-erythritol 4-phosphate (MEP). This is 2-C-methyl-D-erythritol 4-phosphate cytidylyltransferase from Cupriavidus pinatubonensis (strain JMP 134 / LMG 1197) (Cupriavidus necator (strain JMP 134)).